Consider the following 283-residue polypeptide: Bifunctional protein FolD 2 (283 aa).

Residues 165–167 (GRG), threonine 192, and valine 233 contribute to the NADP(+) site.

Belongs to the tetrahydrofolate dehydrogenase/cyclohydrolase family. Homodimer.

The enzyme catalyses (6R)-5,10-methylene-5,6,7,8-tetrahydrofolate + NADP(+) = (6R)-5,10-methenyltetrahydrofolate + NADPH. The catalysed reaction is (6R)-5,10-methenyltetrahydrofolate + H2O = (6R)-10-formyltetrahydrofolate + H(+). Its pathway is one-carbon metabolism; tetrahydrofolate interconversion. In terms of biological role, catalyzes the oxidation of 5,10-methylenetetrahydrofolate to 5,10-methenyltetrahydrofolate and then the hydrolysis of 5,10-methenyltetrahydrofolate to 10-formyltetrahydrofolate. The chain is Bifunctional protein FolD 2 from Nocardioides sp. (strain ATCC BAA-499 / JS614).